A 228-amino-acid chain; its full sequence is Small ribosomal subunit protein uS3 (228 aa).

The KH type-2 domain occupies 39–107 (TREYLQDKLK…PVHINIEEIR (69 aa)).

The protein belongs to the universal ribosomal protein uS3 family. In terms of assembly, part of the 30S ribosomal subunit. Forms a tight complex with proteins S10 and S14.

Binds the lower part of the 30S subunit head. Binds mRNA in the 70S ribosome, positioning it for translation. The chain is Small ribosomal subunit protein uS3 from Pseudomonas entomophila (strain L48).